We begin with the raw amino-acid sequence, 373 residues long: Ras association domain-containing protein 7 (373 aa).

The Ras-associating domain maps to 6-89 (AAMELKVWVD…VQFVLRRTGP (84 aa)). The interval 122 to 150 (CEPRKTLTPEPAPSLSRPGPAAPVTPTPG) is disordered. Coiled coils occupy residues 175 to 227 (WEQE…AAEA) and 248 to 297 (QERQ…QFIQ). A disordered region spans residues 300–356 (GAALPPPPRPDRGPPGTQGPLPPAREESLLGAPSESHAGAQPRPRGGPHDAELLEVA).

Interacts with MAP2K7 and GTP-bound NRAS. Post-translationally, polyubiquitinated and degraded by the proteasome upon prolonged stress stimuli.

It is found in the cytoplasm. The protein resides in the cytoskeleton. Its subcellular location is the microtubule organizing center. The protein localises to the centrosome. Negatively regulates stress-induced JNK activation and apoptosis by promoting MAP2K7 phosphorylation and inhibiting its ability to activate JNK. Following prolonged stress, anti-apoptotic effect stops because of degradation of RASSF7 protein via the ubiquitin-proteasome pathway. Required for the activation of AURKB and chromosomal congression during mitosis where it stimulates microtubule polymerization. This chain is Ras association domain-containing protein 7 (RASSF7), found in Homo sapiens (Human).